A 217-amino-acid chain; its full sequence is MQFLIPVVILCVSLVDSQKVLYNNEIGFNNGFYYAFWKDSGSATFTLESGGRYAGNWTTSTNNWVGGKGWNPGNSWRTVNYSGYYGINEYANSYLSLYGWTTNPLIEYYVVESYGSYSPLNCPGGTDEGSFTSGGATYQVRKCRRTNAPSIIGTQSFDQYFSVRTPKKGFGQVSGSVNFADHVQYWASKGLPLGTHAHQIFATEGYQSSGFADITVS.

Residues 1 to 17 (MQFLIPVVILCVSLVDS) form the signal peptide. Residues 20–217 (VLYNNEIGFN…SSGFADITVS (198 aa)) form the GH11 domain. Residues Asn56 and Asn80 are each glycosylated (N-linked (GlcNAc...) asparagine). Glu107 acts as the Nucleophile in catalysis. The active-site Proton donor is Glu204.

It belongs to the glycosyl hydrolase 11 (cellulase G) family. In terms of tissue distribution, expressed in larval carcasses and gut, and adult gut.

It is found in the secreted. It carries out the reaction Endohydrolysis of (1-&gt;4)-beta-D-xylosidic linkages in xylans.. Its pathway is glycan degradation; xylan degradation. This Phaedon cochleariae (Mustard beetle) protein is Endo-1,4-beta-xylanase.